The sequence spans 214 residues: GTP-binding nuclear protein GSP1/Ran (214 aa).

Residues 4-168 (EVAAFKLVLV…LWLARKLAGN (165 aa)) enclose the Small GTPase Ran-type domain. 15 to 22 (DGGTGKTT) contributes to the GTP binding site. Residues 34–42 (NRYNATLGV) form a switch-I region. GTP is bound by residues Gly65, 119-122 (NKVD), and 147-149 (SAK). Positions 65–81 (GQEKFGGLRDGYYINGQ) are switch-II.

The protein belongs to the small GTPase superfamily. Ran family. Found in a nuclear export complex with RanGTP, exportin and pre-miRNA.

The protein resides in the nucleus. Functionally, GTP-binding protein involved in nucleocytoplasmic transport. Required for the import of protein into the nucleus and also for RNA export. Involved in chromatin condensation and control of cell cycle. In Yarrowia lipolytica (strain CLIB 122 / E 150) (Yeast), this protein is GTP-binding nuclear protein GSP1/Ran (GSP1).